A 273-amino-acid polypeptide reads, in one-letter code: MHEAQIRVAIVGAGGRMGRQLIQAAMAMEGVQLGAALEREGSSLLGSDAGELAGVGKTGVIIQSDLASVKDDFDVLVDFTRPEGTLAHLAFCRKHGKGMVIGTTGFDDAGKQAIREASQEIAIVFAANFSVGVNVMLKLLEKAAKVMGDYTDIEIIEAHHRHKVDAPSGTALAMGEAIAGALDKDLKDCAVYSREGYTGERVPGTIGFATVRAGDIVGEHTAMFADIGERVEITHKASSRMTFANGALRSALWLKTKKNGLFDMRDVLGLDVL.

NAD(+) is bound by residues G12 to M17 and E38. R39 contributes to the NADP(+) binding site. NAD(+)-binding positions include G102–T104 and A126–F129. H159 (proton donor/acceptor) is an active-site residue. H160 serves as a coordination point for (S)-2,3,4,5-tetrahydrodipicolinate. The active-site Proton donor is the K163. G169–T170 is a binding site for (S)-2,3,4,5-tetrahydrodipicolinate.

It belongs to the DapB family. As to quaternary structure, homotetramer.

The protein resides in the cytoplasm. It carries out the reaction (S)-2,3,4,5-tetrahydrodipicolinate + NAD(+) + H2O = (2S,4S)-4-hydroxy-2,3,4,5-tetrahydrodipicolinate + NADH + H(+). It catalyses the reaction (S)-2,3,4,5-tetrahydrodipicolinate + NADP(+) + H2O = (2S,4S)-4-hydroxy-2,3,4,5-tetrahydrodipicolinate + NADPH + H(+). It participates in amino-acid biosynthesis; L-lysine biosynthesis via DAP pathway; (S)-tetrahydrodipicolinate from L-aspartate: step 4/4. Its function is as follows. Catalyzes the conversion of 4-hydroxy-tetrahydrodipicolinate (HTPA) to tetrahydrodipicolinate. The chain is 4-hydroxy-tetrahydrodipicolinate reductase from Salmonella schwarzengrund (strain CVM19633).